Reading from the N-terminus, the 339-residue chain is Meiotic recombination protein rec7 (339 aa).

Functionally, may be involved primarily in the early steps of meiotic recombination. The sequence is that of Meiotic recombination protein rec7 (rec7) from Schizosaccharomyces pombe (strain 972 / ATCC 24843) (Fission yeast).